The primary structure comprises 473 residues: Bifunctional protein HldE (473 aa).

The interval 1 to 318 (MKLSMPRFDQ…RAIQREEGSE (318 aa)) is ribokinase. 194-197 (NLSE) provides a ligand contact to ATP. The active site involves Asp-263. A cytidylyltransferase region spans residues 343–473 (FTNGCFDILH…TAIVEKIRKN (131 aa)).

The protein in the N-terminal section; belongs to the carbohydrate kinase PfkB family. In the C-terminal section; belongs to the cytidylyltransferase family. As to quaternary structure, homodimer.

It catalyses the reaction D-glycero-beta-D-manno-heptose 7-phosphate + ATP = D-glycero-beta-D-manno-heptose 1,7-bisphosphate + ADP + H(+). The catalysed reaction is D-glycero-beta-D-manno-heptose 1-phosphate + ATP + H(+) = ADP-D-glycero-beta-D-manno-heptose + diphosphate. It functions in the pathway nucleotide-sugar biosynthesis; ADP-L-glycero-beta-D-manno-heptose biosynthesis; ADP-L-glycero-beta-D-manno-heptose from D-glycero-beta-D-manno-heptose 7-phosphate: step 1/4. It participates in nucleotide-sugar biosynthesis; ADP-L-glycero-beta-D-manno-heptose biosynthesis; ADP-L-glycero-beta-D-manno-heptose from D-glycero-beta-D-manno-heptose 7-phosphate: step 3/4. Its function is as follows. Catalyzes the phosphorylation of D-glycero-D-manno-heptose 7-phosphate at the C-1 position to selectively form D-glycero-beta-D-manno-heptose-1,7-bisphosphate. Functionally, catalyzes the ADP transfer from ATP to D-glycero-beta-D-manno-heptose 1-phosphate, yielding ADP-D-glycero-beta-D-manno-heptose. This is Bifunctional protein HldE from Pseudomonas putida (strain GB-1).